The following is a 260-amino-acid chain: DNA repair protein RecO (260 aa).

This sequence belongs to the RecO family.

Functionally, involved in DNA repair and RecF pathway recombination. The chain is DNA repair protein RecO from Chlorobaculum parvum (strain DSM 263 / NCIMB 8327) (Chlorobium vibrioforme subsp. thiosulfatophilum).